An 881-amino-acid chain; its full sequence is Fanconi anemia core complex-associated protein 100 (881 aa).

A disordered region spans residues 94–119 (GRSRSTSQDDRDSEDGDQPSPVIPVD). S667 is modified (phosphoserine).

In terms of assembly, belongs to the multisubunit FA complex composed of FANCA, FANCB, FANCC, FANCE, FANCF, FANCG, FANCL/PHF9, FANCM, FAAP24 and FAAP100. Forms a subcomplex with FANCB and FANCL.

It localises to the nucleus. Functionally, plays a role in Fanconi anemia-associated DNA damage response network. Regulates FANCD2 monoubiquitination and the stability of the FA core complex. Induces chromosomal instability as well as hypersensitivity to DNA cross-linking agents, when repressed. The protein is Fanconi anemia core complex-associated protein 100 of Homo sapiens (Human).